The chain runs to 145 residues: Ribosome-binding factor A (145 aa).

Residues 122–132 show a composition bias toward basic and acidic residues; sequence KVQRDLESAPR. A disordered region spans residues 122–145; sequence KVQRDLESAPREDDEGEPASSSRD.

Belongs to the RbfA family. As to quaternary structure, monomer. Binds 30S ribosomal subunits, but not 50S ribosomal subunits or 70S ribosomes.

It is found in the cytoplasm. In terms of biological role, one of several proteins that assist in the late maturation steps of the functional core of the 30S ribosomal subunit. Associates with free 30S ribosomal subunits (but not with 30S subunits that are part of 70S ribosomes or polysomes). Required for efficient processing of 16S rRNA. May interact with the 5'-terminal helix region of 16S rRNA. The sequence is that of Ribosome-binding factor A from Methylorubrum extorquens (strain CM4 / NCIMB 13688) (Methylobacterium extorquens).